The primary structure comprises 201 residues: Putative manganese efflux pump MntP 2 (201 aa).

A run of 6 helical transmembrane segments spans residues Leu3–Thr23, Ile39–Ile59, Ile65–Ile85, Leu116–Phe136, Ile141–Met161, and Ile176–Ile196.

Belongs to the MntP (TC 9.B.29) family.

It localises to the cell membrane. In terms of biological role, probably functions as a manganese efflux pump. The polypeptide is Putative manganese efflux pump MntP 2 (Clostridium botulinum (strain Hall / ATCC 3502 / NCTC 13319 / Type A)).